We begin with the raw amino-acid sequence, 412 residues long: Putative competence-damage inducible protein (412 aa).

This sequence belongs to the CinA family.

The chain is Putative competence-damage inducible protein from Bacillus cytotoxicus (strain DSM 22905 / CIP 110041 / 391-98 / NVH 391-98).